The sequence spans 174 residues: 2-oxo-4-hydroxy-4-carboxy-5-ureidoimidazoline decarboxylase (174 aa).

The Proton donor role is filled by H67. Substrate contacts are provided by residues P68, 84–88 (SQEEQ), and 119–123 (FVICA). The Microbody targeting signal signature appears at 172–174 (TKL).

Belongs to the OHCU decarboxylase family. As to quaternary structure, homodimer.

It is found in the peroxisome. The enzyme catalyses 5-hydroxy-2-oxo-4-ureido-2,5-dihydro-1H-imidazole-5-carboxylate + H(+) = (S)-allantoin + CO2. It functions in the pathway purine metabolism; urate degradation; (S)-allantoin from urate: step 3/3. Its function is as follows. Catalyzes the stereoselective decarboxylation of 2-oxo-4-hydroxy-4-carboxy-5-ureidoimidazoline (OHCU) to (S)-allantoin. This is 2-oxo-4-hydroxy-4-carboxy-5-ureidoimidazoline decarboxylase (urad) from Danio rerio (Zebrafish).